Here is a 283-residue protein sequence, read N- to C-terminus: Polyamine aminopropyltransferase (283 aa).

A PABS domain is found at 2–238 (ELWYTEEWTE…GHWLFGFASK (237 aa)). Glutamine 31 is a binding site for S-methyl-5'-thioadenosine. Residues histidine 62 and aspartate 86 each coordinate spermidine. S-methyl-5'-thioadenosine is bound by residues glutamate 106 and 137-138 (DG). Catalysis depends on aspartate 156, which acts as the Proton acceptor. 156–159 (DSTD) contributes to the spermidine binding site. Residue proline 163 coordinates S-methyl-5'-thioadenosine.

Belongs to the spermidine/spermine synthase family. In terms of assembly, homodimer or homotetramer.

The protein localises to the cytoplasm. The enzyme catalyses S-adenosyl 3-(methylsulfanyl)propylamine + putrescine = S-methyl-5'-thioadenosine + spermidine + H(+). Its pathway is amine and polyamine biosynthesis; spermidine biosynthesis; spermidine from putrescine: step 1/1. Catalyzes the irreversible transfer of a propylamine group from the amino donor S-adenosylmethioninamine (decarboxy-AdoMet) to putrescine (1,4-diaminobutane) to yield spermidine. The sequence is that of Polyamine aminopropyltransferase from Clostridioides difficile (strain 630) (Peptoclostridium difficile).